The chain runs to 117 residues: Ribonuclease P protein component (117 aa).

This sequence belongs to the RnpA family. As to quaternary structure, consists of a catalytic RNA component (M1 or rnpB) and a protein subunit.

The catalysed reaction is Endonucleolytic cleavage of RNA, removing 5'-extranucleotides from tRNA precursor.. Its function is as follows. RNaseP catalyzes the removal of the 5'-leader sequence from pre-tRNA to produce the mature 5'-terminus. It can also cleave other RNA substrates such as 4.5S RNA. The protein component plays an auxiliary but essential role in vivo by binding to the 5'-leader sequence and broadening the substrate specificity of the ribozyme. This Lactococcus lactis subsp. cremoris (strain MG1363) protein is Ribonuclease P protein component.